The sequence spans 1315 residues: Activating molecule in BECN1-regulated autophagy protein 1A (1315 aa).

WD repeat units lie at residues 50 to 89 (DSPRSTFLLAFSPDRSLMASTHVNHNIYITEVKSGKCVHS), 92 to 132 (GHRR…ESWL), and 134 to 174 (ESNS…TVVK). Disordered stretches follow at residues 294–322 (RVPSPPDEDPSDSASLEAQAHTFSSARTE), 342–409 (FSSV…QRTG), 426–463 (FQSPVYTSASDRWGSTPGTSSSRHRPPEEEGQSSSSSI), 502–526 (NNNMDPEQPGPSHYQSPYSGENPPH), 545–610 (SRRW…DTGQ), 630–660 (VYRQSASSRSANISQGALNQEMPEDTPDNDY), 681–736 (RDSV…PRNA), 985–1134 (HSDG…STGQ), 1181–1208 (GSQTGADAQNRTRLSPIPGPSSGAPESL), and 1286–1315 (LLSSSPSLSPVNNSNYSNSDSSYLGDEYGR). Residues 351-360 (NMRNHSSSSG) are compositionally biased toward polar residues. Basic and acidic residues predominate over residues 378 to 388 (PGREGGGRHPG). 2 stretches are compositionally biased toward polar residues: residues 394 to 409 (SGLNGQSSSMTPQRTG) and 426 to 435 (FQSPVYTSAS). 2 stretches are compositionally biased toward polar residues: residues 552–581 (GQPSSTERNTPWQPSSSAFHSVAPVSQSNE) and 633–647 (QSASSRSANISQGAL). Residues 696 to 715 (RPLSSNPSSLSPSPVPNAES) show a composition bias toward low complexity. A compositionally biased stretch (acidic residues) spans 716 to 725 (SEVDFEEFEE). Residues 1009–1021 (PSSSRSGDRAGSS) show a composition bias toward low complexity. Basic and acidic residues predominate over residues 1022 to 1031 (RTDRRSRRDI). A compositionally biased stretch (polar residues) spans 1047–1060 (SVTSQGTQTQNQRL). Short sequence motifs (TQT motif) lie at residues 1053–1055 (TQT) and 1065–1067 (TQT). Basic and acidic residues predominate over residues 1061 to 1072 (QHAETQTDRDLP). The span at 1076-1090 (QQPSTSQGSQVTDAT) shows a compositional bias: polar residues. A compositionally biased stretch (acidic residues) spans 1091–1103 (ESLDFETLPEDSG). Polar residues-rich tracts occupy residues 1125–1134 (SEPSTDSTGQ) and 1181–1193 (GSQTGADAQNRTR). Over residues 1286 to 1307 (LLSSSPSLSPVNNSNYSNSDSS) the composition is skewed to low complexity.

Belongs to the WD repeat AMBRA1 family. In terms of assembly, component of the DCX(AMBRA1) E3 ubiquitin ligase complex.

It localises to the endoplasmic reticulum. It is found in the cytoplasm. Its subcellular location is the cytoskeleton. The protein resides in the cytoplasmic vesicle. The protein localises to the autophagosome. It localises to the mitochondrion. It is found in the cytosol. Its subcellular location is the nucleus. The protein resides in the cell junction. The protein localises to the focal adhesion. The protein operates within protein modification; protein ubiquitination. Functionally, substrate-recognition component of a DCX (DDB1-CUL4-X-box) E3 ubiquitin-protein ligase complex involved in cell cycle control and autophagy. The DCX(AMBRA1) complex specifically mediates the polyubiquitination of target proteins. Acts as an upstream master regulator of the transition from G1 to S cell phase: ambra1a specifically recognizes and binds phosphorylated cyclin-D (ccnd1, ccnd2 and ccnd3), leading to cyclin-D ubiquitination by the DCX(AMBRA1) complex and subsequent degradation. Acts as a regulator of Cul5-RING (CRL5) E3 ubiquitin-protein ligase complexes by mediating ubiquitination and degradation of Elongin-C (eloc) component of CRL5 complexes. Acts as a key regulator of autophagy by modulating the BECN1-PIK3C3 complex: controls protein turnover during neuronal development, and regulates normal cell survival and proliferation. In normal conditions, ambra1a is tethered to the cytoskeleton via interaction with dyneins light chains. Upon autophagy induction, ambra1a is released from the cytoskeletal docking site to induce autophagosome nucleation by mediating ubiquitination of proteins involved in autophagy. Also acts as an activator of mitophagy. Required for skeletal muscle development. The chain is Activating molecule in BECN1-regulated autophagy protein 1A from Danio rerio (Zebrafish).